The following is a 207-amino-acid chain: Redox-sensing transcriptional repressor Rex (207 aa).

Residues Ile-17 to Phe-56 constitute a DNA-binding region (H-T-H motif). Residue Gly-91–Gly-96 coordinates NAD(+).

It belongs to the transcriptional regulatory Rex family. As to quaternary structure, homodimer.

It is found in the cytoplasm. In terms of biological role, modulates transcription in response to changes in cellular NADH/NAD(+) redox state. This Brevibacillus brevis (strain 47 / JCM 6285 / NBRC 100599) protein is Redox-sensing transcriptional repressor Rex.